A 694-amino-acid chain; its full sequence is Elongation factor G (694 aa).

Residues 8–287 (EDYRNFGIMA…AVISYLPSPV (280 aa)) enclose the tr-type G domain. GTP is bound by residues 17–24 (AHIDAGKT), 86–90 (DTPGH), and 140–143 (NKMD).

Belongs to the TRAFAC class translation factor GTPase superfamily. Classic translation factor GTPase family. EF-G/EF-2 subfamily.

It localises to the cytoplasm. In terms of biological role, catalyzes the GTP-dependent ribosomal translocation step during translation elongation. During this step, the ribosome changes from the pre-translocational (PRE) to the post-translocational (POST) state as the newly formed A-site-bound peptidyl-tRNA and P-site-bound deacylated tRNA move to the P and E sites, respectively. Catalyzes the coordinated movement of the two tRNA molecules, the mRNA and conformational changes in the ribosome. This chain is Elongation factor G, found in Bartonella quintana (strain Toulouse) (Rochalimaea quintana).